The chain runs to 513 residues: MQLNPSEISELIKSRIQGLEASADVRNQGTVISVTDGIVRIHGLSDVMQGEMLEFPGNTFGLALNLERDSVGAVILGEYEHISEGDIVKTTGRILEVPVGPELVGRVVDALGNPIDGKGPVNAKLTDAIEKIAPGVIWRKSVSQPVQTGIKSIDAMVPIGRGQRELIIGDRQCGKTAVALDAIINQKGKDLICIYVAIGQKASSIMNVVRKLEETGAMEYTIVVAASASDSAAMQYLAPYAGCTMGEYFRDRGQDALIIYDDLTKQAWAYRQISLLLRRPPGREAYPGDVFYLHSRLLERAARVSEEYVEKFTNGEVKGKSGSLTALPVIETQAGDVTAFVPTNVISITDGQIFLETDLFNAGIRPAINAGVSVSRVGGAAQTKVVKKLSGGIRTDLAQYRELAAFAQFASDLDEATRKQLERGRRVTELLKQPQYQPLQVWELAVSLYAANNGYLDDLDVKQVLPFEKGLRDNLKTSHADLIKRIEDTKDLSKDDEGALRSAIEAFKKSGAY.

ATP is bound at residue 169-176 (GDRQCGKT).

It belongs to the ATPase alpha/beta chains family. In terms of assembly, F-type ATPases have 2 components, CF(1) - the catalytic core - and CF(0) - the membrane proton channel. CF(1) has five subunits: alpha(3), beta(3), gamma(1), delta(1), epsilon(1). CF(0) has three main subunits: a(1), b(2) and c(9-12). The alpha and beta chains form an alternating ring which encloses part of the gamma chain. CF(1) is attached to CF(0) by a central stalk formed by the gamma and epsilon chains, while a peripheral stalk is formed by the delta and b chains.

The protein localises to the cell inner membrane. The catalysed reaction is ATP + H2O + 4 H(+)(in) = ADP + phosphate + 5 H(+)(out). Produces ATP from ADP in the presence of a proton gradient across the membrane. The alpha chain is a regulatory subunit. The protein is ATP synthase subunit alpha of Burkholderia orbicola (strain AU 1054).